A 266-amino-acid polypeptide reads, in one-letter code: Glutamate racemase (266 aa).

Substrate is bound by residues 9 to 10 and 41 to 42; these read DS and YG. The Proton donor/acceptor role is filled by cysteine 72. Residue 73 to 74 coordinates substrate; it reads NT. The active-site Proton donor/acceptor is cysteine 183. Position 184–185 (184–185) interacts with substrate; it reads TH.

The protein belongs to the aspartate/glutamate racemases family.

The enzyme catalyses L-glutamate = D-glutamate. The protein operates within cell wall biogenesis; peptidoglycan biosynthesis. Its function is as follows. Provides the (R)-glutamate required for cell wall biosynthesis. The polypeptide is Glutamate racemase (Listeria innocua serovar 6a (strain ATCC BAA-680 / CLIP 11262)).